The primary structure comprises 358 residues: Phosphoserine aminotransferase (358 aa).

L-glutamate is bound at residue arginine 41. Pyridoxal 5'-phosphate is bound by residues 75–76 (AS), tryptophan 100, threonine 148, aspartate 167, and glutamine 190. Lysine 191 carries the post-translational modification N6-(pyridoxal phosphate)lysine. Residue 233–234 (NT) participates in pyridoxal 5'-phosphate binding.

This sequence belongs to the class-V pyridoxal-phosphate-dependent aminotransferase family. SerC subfamily. In terms of assembly, homodimer. Requires pyridoxal 5'-phosphate as cofactor.

It is found in the cytoplasm. The catalysed reaction is O-phospho-L-serine + 2-oxoglutarate = 3-phosphooxypyruvate + L-glutamate. It catalyses the reaction 4-(phosphooxy)-L-threonine + 2-oxoglutarate = (R)-3-hydroxy-2-oxo-4-phosphooxybutanoate + L-glutamate. It participates in amino-acid biosynthesis; L-serine biosynthesis; L-serine from 3-phospho-D-glycerate: step 2/3. It functions in the pathway cofactor biosynthesis; pyridoxine 5'-phosphate biosynthesis; pyridoxine 5'-phosphate from D-erythrose 4-phosphate: step 3/5. Functionally, catalyzes the reversible conversion of 3-phosphohydroxypyruvate to phosphoserine and of 3-hydroxy-2-oxo-4-phosphonooxybutanoate to phosphohydroxythreonine. This Campylobacter jejuni subsp. doylei (strain ATCC BAA-1458 / RM4099 / 269.97) protein is Phosphoserine aminotransferase.